The following is a 188-amino-acid chain: Elongation factor P (188 aa).

At Lys-34 the chain carries N6-(3,6-diaminohexanoyl)-5-hydroxylysine.

The protein belongs to the elongation factor P family. May be beta-lysylated on the epsilon-amino group of Lys-34 by the combined action of EpmA and EpmB, and then hydroxylated on the C5 position of the same residue by EpmC (if this protein is present). Lysylation is critical for the stimulatory effect of EF-P on peptide-bond formation. The lysylation moiety may extend toward the peptidyltransferase center and stabilize the terminal 3-CCA end of the tRNA. Hydroxylation of the C5 position on Lys-34 may allow additional potential stabilizing hydrogen-bond interactions with the P-tRNA.

It is found in the cytoplasm. Its pathway is protein biosynthesis; polypeptide chain elongation. Involved in peptide bond synthesis. Alleviates ribosome stalling that occurs when 3 or more consecutive Pro residues or the sequence PPG is present in a protein, possibly by augmenting the peptidyl transferase activity of the ribosome. Modification of Lys-34 is required for alleviation. This chain is Elongation factor P, found in Photorhabdus laumondii subsp. laumondii (strain DSM 15139 / CIP 105565 / TT01) (Photorhabdus luminescens subsp. laumondii).